The chain runs to 380 residues: tRNA (guanine(26)-N(2))-dimethyltransferase (380 aa).

One can recognise a Trm1 methyltransferase domain in the interval 2 to 374; it reads ITVNEGSVTI…AGIGEIEEVL (373 aa). S-adenosyl-L-methionine contacts are provided by R35, R65, D83, D109, and A110. Zn(2+) contacts are provided by C242, C245, C261, and C264.

Belongs to the class I-like SAM-binding methyltransferase superfamily. Trm1 family.

It catalyses the reaction guanosine(26) in tRNA + 2 S-adenosyl-L-methionine = N(2)-dimethylguanosine(26) in tRNA + 2 S-adenosyl-L-homocysteine + 2 H(+). Its function is as follows. Dimethylates a single guanine residue at position 26 of a number of tRNAs using S-adenosyl-L-methionine as donor of the methyl groups. This chain is tRNA (guanine(26)-N(2))-dimethyltransferase, found in Methanothermobacter thermautotrophicus (strain ATCC 29096 / DSM 1053 / JCM 10044 / NBRC 100330 / Delta H) (Methanobacterium thermoautotrophicum).